The chain runs to 267 residues: Apolipoprotein A-I (267 aa).

Positions M1 to A18 are cleaved as a signal peptide. 2 tandem repeats follow at residues L68–G89 and P90–S111. The tract at residues L68–Q267 is 10 X approximate tandem repeats. At M110 the chain carries Methionine sulfoxide. The 3; half-length repeat unit spans residues K112–Q122. Tandem repeats lie at residues P123–E144, P145–S166, P167–A188, P189–G210, and A211–K232. Methionine sulfoxide is present on M136. A 9; half-length repeat occupies P233–L243. Residues P244–Q267 form repeat 10.

The protein belongs to the apolipoprotein A1/A4/E family. In terms of assembly, homodimer. Interacts with APOA1BP and CLU. Component of a sperm activating protein complex (SPAP), consisting of APOA1, an immunoglobulin heavy chain, an immunoglobulin light chain and albumin. Interacts with NDRG1. Interacts with SCGB3A2. Interacts with NAXE and YJEFN3. Post-translationally, glycosylated. In terms of processing, palmitoylated. As to expression, major protein of plasma HDL, also found in chylomicrons.

It localises to the secreted. Its function is as follows. Participates in the reverse transport of cholesterol from tissues to the liver for excretion by promoting cholesterol efflux from tissues and by acting as a cofactor for the lecithin cholesterol acyltransferase (LCAT). As part of the SPAP complex, activates spermatozoa motility. The chain is Apolipoprotein A-I (APOA1) from Pongo abelii (Sumatran orangutan).